Consider the following 358-residue polypeptide: Bi-functional coumaroyl CoA and feruloyl CoA ortho-hydroxylase F6H2-1-1 (358 aa).

Residues 207-308 enclose the Fe2OG dioxygenase domain; it reads GSRRININYY…RISVPVFVNP (102 aa). A 2-oxoglutarate-binding site is contributed by Tyr216. Residues His231, Asp233, and His289 each coordinate Fe cation. Residues Arg299 and Ser301 each contribute to the 2-oxoglutarate site.

It belongs to the iron/ascorbate-dependent oxidoreductase family. L-ascorbate serves as cofactor. It depends on Fe(2+) as a cofactor. Mostly expressed in underground stems and stems, and, at low levels, in tubers, leaves and petioles.

The enzyme catalyses (E)-4-coumaroyl-CoA + 2-oxoglutarate + O2 = (E)-2,4-dihydroxycinnamoyl-CoA + succinate + CO2. It catalyses the reaction (E)-feruloyl-CoA + 2-oxoglutarate + O2 = (E)-6-hydroxyferuloyl-CoA + succinate + CO2. It participates in phenylpropanoid metabolism. 2-oxoglutarate (OG)- and Fe(II)-dependent dioxygenase (2OGD) involved in scopoletin and umbelliferone biosynthesis. Converts feruloyl CoA into 6'-hydroxyferuloyl CoA, and p-coumaroyl CoA into 2,4-dihydroxycinnamoyl-CoA, but has no activity with caffeoyl-CoA. This is Bi-functional coumaroyl CoA and feruloyl CoA ortho-hydroxylase F6H2-1-1 from Ipomoea batatas (Sweet potato).